Consider the following 309-residue polypeptide: Bifunctional methylenetetrahydrofolate dehydrogenase/cyclohydrolase, mitochondrial (309 aa).

Belongs to the tetrahydrofolate dehydrogenase/cyclohydrolase family. Homodimer. The cofactor is Mg(2+).

It localises to the mitochondrion. It carries out the reaction (6R)-5,10-methylene-5,6,7,8-tetrahydrofolate + NAD(+) = (6R)-5,10-methenyltetrahydrofolate + NADH. The catalysed reaction is (6R)-5,10-methenyltetrahydrofolate + H2O = (6R)-10-formyltetrahydrofolate + H(+). Functionally, may play a role in spermatogenesis. The protein is Bifunctional methylenetetrahydrofolate dehydrogenase/cyclohydrolase, mitochondrial (Nmdmc) of Drosophila melanogaster (Fruit fly).